Consider the following 204-residue polypeptide: Guanylate kinase (204 aa).

Residues 3–181 (GTLYIVSASS…AVSEMSAIFT (179 aa)) form the Guanylate kinase-like domain. 10–17 (ASSGTGKS) provides a ligand contact to ATP.

This sequence belongs to the guanylate kinase family.

It localises to the cytoplasm. The enzyme catalyses GMP + ATP = GDP + ADP. In terms of biological role, essential for recycling GMP and indirectly, cGMP. In Xylella fastidiosa (strain Temecula1 / ATCC 700964), this protein is Guanylate kinase.